Here is a 117-residue protein sequence, read N- to C-terminus: Non-specific lipid-transfer protein 2B (117 aa).

The N-terminal stretch at 1–25 is a signal peptide; that stretch reads MARAQLVLVALVAALLLAGPHTTMA. Intrachain disulfides connect Cys29/Cys76, Cys39/Cys53, Cys54/Cys99, and Cys74/Cys113.

The protein belongs to the plant LTP family. As to expression, expressed in roots, mesocotyls and developing leaves.

In terms of biological role, plant non-specific lipid-transfer proteins transfer phospholipids as well as galactolipids across membranes. May play a role in wax or cutin deposition in the cell walls of expanding epidermal cells and certain secretory tissues. The polypeptide is Non-specific lipid-transfer protein 2B (LTP2-B) (Oryza sativa subsp. japonica (Rice)).